The sequence spans 92 residues: MSCQQNQKQCQPPPKCPSPKCPPKNPVQCLPPASSGCAPSSGGCGPSSEGGCFLNHHRRHHRCRRQRSNSCDRGSGQQGGGSGCCHGSGGCC.

A compositionally biased stretch (low complexity) spans 1 to 10 (MSCQQNQKQC). 2 disordered regions span residues 1–22 (MSCQ…PKCP) and 64–92 (RRQR…GGCC). Residues 11-22 (QPPPKCPSPKCP) are compositionally biased toward pro residues. Gly residues predominate over residues 76-92 (GQQGGGSGCCHGSGGCC).

The protein belongs to the LCE family. As to quaternary structure, interacts with CYSRT1. In terms of tissue distribution, skin-specific. Expression was readily detected in adult trunk skin, adult arm skin, fetal skin, penal skin, vulva, esophagus and tongue. Not expressed in the cervix, rectum, lung, colon, or placenta.

Its function is as follows. Precursors of the cornified envelope of the stratum corneum. This is Late cornified envelope protein 3E (LCE3E) from Homo sapiens (Human).